Consider the following 592-residue polypeptide: E3 ubiquitin-protein ligase RNF180 (592 aa).

The Cytoplasmic segment spans residues 1–564; that stretch reads MKRSEESTST…DSRGWWFDMD (564 aa). Ser231 carries the phosphoserine modification. The tract at residues 282–489 is interaction with ZIC2; the sequence is QSPPSFDPNM…VFLQTELNNA (208 aa). The RING-type zinc-finger motif lies at 432–474; it reads CAVCLDVYFNPYMCYPCHHIFCEPCLRTLAKDNPASTPCPLCR. Residues 565 to 585 traverse the membrane as a helical segment; the sequence is MVIIYIYSVNWVIGFVVFCFL. Topologically, residues 586-592 are extracellular; that stretch reads CYFFFPF.

As to quaternary structure, interacts with ZIC2. As to expression, brain, kidney, testis and uterus. membrane protein. Nucleus envelope.

The protein localises to the endoplasmic reticulum membrane. The protein resides in the nucleus envelope. The catalysed reaction is S-ubiquitinyl-[E2 ubiquitin-conjugating enzyme]-L-cysteine + [acceptor protein]-L-lysine = [E2 ubiquitin-conjugating enzyme]-L-cysteine + N(6)-ubiquitinyl-[acceptor protein]-L-lysine.. The protein operates within protein modification; protein ubiquitination. In terms of biological role, E3 ubiquitin-protein ligase which promotes polyubiquitination and degradation by the proteasome pathway of ZIC2. This is E3 ubiquitin-protein ligase RNF180 (Rnf180) from Mus musculus (Mouse).